Reading from the N-terminus, the 293-residue chain is Biphenyl-2,3-diol 1,2-dioxygenase (293 aa).

VOC domains lie at 5–119 and 143–265; these read RLGY…IYYG and GIGH…FGWG. The Fe cation site is built by H146, H210, and E261.

It belongs to the extradiol ring-cleavage dioxygenase family. Homooctamer. It depends on Fe(2+) as a cofactor.

It catalyses the reaction biphenyl-2,3-diol + O2 = 2-hydroxy-6-oxo-6-phenylhexa-2,4-dienoate + H(+). It functions in the pathway xenobiotic degradation; biphenyl degradation; 2-hydroxy-2,4-pentadienoate and benzoate from biphenyl: step 3/4. The chain is Biphenyl-2,3-diol 1,2-dioxygenase (bphC) from Pseudomonas sp. (strain KKS102).